The chain runs to 339 residues: Immunoglobulin-binding protein 1 (339 aa).

The residue at position 2 (Ala2) is an N-acetylalanine. Residues 46 to 60 enclose the UIM domain; it reads LDLLEKAAEMLSQLD. The interaction with PPP2CA stretch occupies residues 98–202; sequence RLDHLQRARE…YLLHLQRWID (105 aa). 2 disordered regions span residues 221–243 and 289–339; these read RDSS…VKPF and APEE…QNMG. The tract at residues 225 to 290 is interaction with MID1; it reads REASTSNSSR…PDQGIAKAAP (66 aa). Lys241 is subject to N6-acetyllysine. The span at 301–312 shows a compositional bias: acidic residues; that stretch reads EEQEEKEEEDDE. A compositionally biased stretch (basic and acidic residues) spans 313–329; sequence QTLHRAREWDDWKDTHP.

It belongs to the IGBP1/TAP42 family. Interacts with partially folded PPP2CA, but not with the fully active protein. Interacts with PPP2CB, and with PP4 and PP6. Interacts with MID1 and MID2. Interacts with ubiquitin. In terms of processing, phosphorylated. Monoubiquitination by MID1 triggers calpain-mediated cleavage and switches IGBP1 activity from protective to destructive. As to expression, ubiquitously expressed with highest levels in heart, skeletal muscle and pancreas.

It localises to the cytoplasm. Associated to surface IgM-receptor; may be involved in signal transduction. Involved in regulation of the catalytic activity of the phosphatases PP2A, PP4 and PP6 by protecting their partially folded catalytic subunits from degradative polyubiquitination until they associate with regulatory subunits. The polypeptide is Immunoglobulin-binding protein 1 (IGBP1) (Homo sapiens (Human)).